The chain runs to 74 residues: Male-specific sperm protein Mst84Db (74 aa).

It belongs to the MST(3)CGP family. As to expression, testis.

This Drosophila melanogaster (Fruit fly) protein is Male-specific sperm protein Mst84Db (Mst84Db).